Consider the following 630-residue polypeptide: Transposase B from transposon Tn554 (630 aa).

Positions 216 to 302 constitute a Core-binding (CB) domain; it reads TYFKQLVKRY…ILEGLFSTLL (87 aa). Residues 326–513 form the Tyr recombinase domain; sequence AKPRFIDEFV…FDETLKNEFT (188 aa). Active-site residues include arginine 363, lysine 391, histidine 465, arginine 468, and histidine 491. The active-site O-(3'-phospho-DNA)-tyrosine intermediate is the tyrosine 500.

Belongs to the 'phage' integrase family.

Its function is as follows. One of three proteins encoded by transposon Tn554 required for its transposition. The polypeptide is Transposase B from transposon Tn554 (tnpB1) (Staphylococcus aureus (strain Mu50 / ATCC 700699)).